The primary structure comprises 286 residues: Deleted in azoospermia-like-B (286 aa).

Positions asparagine 33–valine 114 constitute an RRM domain. The region spanning alanine 155–glutamine 180 is the DAZ domain.

This sequence belongs to the RRM DAZ family. Interacts with the C-terminus of pabp1 and with epabp. Prior to oocyte maturation, found in a complex with epabp and pum2 proteins and spdy1 mRNA; pum2 dissociates from the complex during maturation.

It is found in the cytoplasm. RNA-binding protein that is required for primordial germ cell (PGC) differentiation and indirectly necessary for the migration of PGCs through the endoderm. May promote meiotic cell division during spermatogenesis. Shows a preference for G- and U-rich RNAs and probably binds the 3'-UTR of target mRNAs. Stimulates the initiation of translation of mRNAs through the recruitment of poly(A)-binding proteins (PABPs). This is Deleted in azoospermia-like-B (dazl-b) from Xenopus laevis (African clawed frog).